A 374-amino-acid chain; its full sequence is Probable dual-specificity RNA methyltransferase RlmN (374 aa).

The active-site Proton acceptor is Glu-108. A Radical SAM core domain is found at 114 to 361 (YSDRNTVCIS…SCTVRDTRGR (248 aa)). Cysteines 121 and 367 form a disulfide. [4Fe-4S] cluster is bound by residues Cys-128, Cys-132, and Cys-135. S-adenosyl-L-methionine is bound by residues 188 to 189 (GE), Ser-222, 245 to 247 (SLH), and Asn-324. The active-site S-methylcysteine intermediate is Cys-367.

Belongs to the radical SAM superfamily. RlmN family. It depends on [4Fe-4S] cluster as a cofactor.

The protein localises to the cytoplasm. It catalyses the reaction adenosine(2503) in 23S rRNA + 2 reduced [2Fe-2S]-[ferredoxin] + 2 S-adenosyl-L-methionine = 2-methyladenosine(2503) in 23S rRNA + 5'-deoxyadenosine + L-methionine + 2 oxidized [2Fe-2S]-[ferredoxin] + S-adenosyl-L-homocysteine. The catalysed reaction is adenosine(37) in tRNA + 2 reduced [2Fe-2S]-[ferredoxin] + 2 S-adenosyl-L-methionine = 2-methyladenosine(37) in tRNA + 5'-deoxyadenosine + L-methionine + 2 oxidized [2Fe-2S]-[ferredoxin] + S-adenosyl-L-homocysteine. Functionally, specifically methylates position 2 of adenine 2503 in 23S rRNA and position 2 of adenine 37 in tRNAs. The chain is Probable dual-specificity RNA methyltransferase RlmN from Mycobacterium sp. (strain JLS).